The chain runs to 432 residues: Tryptophan--tRNA ligase, cytoplasmic (432 aa).

The 'HIGH' region motif lies at proline 111–histidine 120. A 'KMSKS' region motif is present at residues lysine 295–serine 299.

It belongs to the class-I aminoacyl-tRNA synthetase family. As to quaternary structure, homodimer.

The protein localises to the cytoplasm. The enzyme catalyses tRNA(Trp) + L-tryptophan + ATP = L-tryptophyl-tRNA(Trp) + AMP + diphosphate + H(+). The chain is Tryptophan--tRNA ligase, cytoplasmic (WRS1) from Saccharomyces cerevisiae (strain ATCC 204508 / S288c) (Baker's yeast).